We begin with the raw amino-acid sequence, 156 residues long: Small ribosomal subunit protein uS7c (156 aa).

Belongs to the universal ribosomal protein uS7 family. In terms of assembly, part of the 30S ribosomal subunit.

The protein resides in the plastid. The protein localises to the chloroplast. One of the primary rRNA binding proteins, it binds directly to 16S rRNA where it nucleates assembly of the head domain of the 30S subunit. The polypeptide is Small ribosomal subunit protein uS7c (rps7) (Tupiella akineta (Green alga)).